The chain runs to 399 residues: 1-deoxy-D-xylulose 5-phosphate reductoisomerase (399 aa).

Residues threonine 13, glycine 14, serine 15, isoleucine 16, and asparagine 127 each contribute to the NADPH site. Residue lysine 128 participates in 1-deoxy-D-xylulose 5-phosphate binding. Position 129 (glutamate 129) interacts with NADPH. Aspartate 153 contacts Mn(2+). Positions 154, 155, 187, and 210 each coordinate 1-deoxy-D-xylulose 5-phosphate. Position 155 (glutamate 155) interacts with Mn(2+). Position 216 (glycine 216) interacts with NADPH. Positions 223, 228, 229, and 232 each coordinate 1-deoxy-D-xylulose 5-phosphate. Residue glutamate 232 participates in Mn(2+) binding.

The protein belongs to the DXR family. Mg(2+) is required as a cofactor. Requires Mn(2+) as cofactor.

It catalyses the reaction 2-C-methyl-D-erythritol 4-phosphate + NADP(+) = 1-deoxy-D-xylulose 5-phosphate + NADPH + H(+). It functions in the pathway isoprenoid biosynthesis; isopentenyl diphosphate biosynthesis via DXP pathway; isopentenyl diphosphate from 1-deoxy-D-xylulose 5-phosphate: step 1/6. Functionally, catalyzes the NADPH-dependent rearrangement and reduction of 1-deoxy-D-xylulose-5-phosphate (DXP) to 2-C-methyl-D-erythritol 4-phosphate (MEP). The chain is 1-deoxy-D-xylulose 5-phosphate reductoisomerase from Bordetella avium (strain 197N).